An 862-amino-acid chain; its full sequence is Phosphatidic acid phosphohydrolase 1 (862 aa).

The segment at N19–V104 is N-LIP. Disordered stretches follow at residues V104–E183 and G300–G341. Residues M105 to T117 are compositionally biased toward polar residues. 2 positions are modified to phosphoserine: S110 and S114. Basic and acidic residues predominate over residues N132–E143. 2 stretches are compositionally biased toward low complexity: residues S161–D179 and G300–S313. S168 bears the Phosphoserine mark. Residues D398–T402 carry the DXDXT motif motif. K496 is modified (N6-acetyllysine). A Phosphoserine modification is found at S511. At S602 the chain carries Phosphoserine; by CDC28. The segment at S648–G732 is disordered. Residues S651–D663 are compositionally biased toward acidic residues. 2 stretches are compositionally biased toward polar residues: residues V664–K679 and P687–E699. A compositionally biased stretch (low complexity) spans A710 to S730. Position 723 is a phosphothreonine; by CDC28 (T723). At S744 the chain carries Phosphoserine; by CDC28. S748, S773, and S774 each carry phosphoserine. Positions M757 to I780 are disordered. Position 801 is an N6-acetyllysine (K801). The tract at residues D807 to D862 is disordered. 2 positions are modified to phosphoserine: S810 and S814. T816 carries the post-translational modification Phosphothreonine. Positions V824–H834 are enriched in polar residues. Positions S836–D848 are enriched in basic and acidic residues. S844 and S847 each carry phosphoserine. The segment covering E849–D862 has biased composition (acidic residues).

It belongs to the lipin family. The cofactor is Mg(2+). Post-translationally, acetylation at Lys-496 and Lys-801 by ESA1 promotes synthesis of diacylglycerol. Phosphorylated by CDC28 at the onset of mitosis, and dephosphorylated by the NEM1-SPO7 complex. Phosphorylation regulates recruitment on promoters of lipid biosynthetic enzymes.

Its subcellular location is the cytoplasm. The protein localises to the nucleus membrane. It is found in the endoplasmic reticulum membrane. It catalyses the reaction a 1,2-diacyl-sn-glycero-3-phosphate + H2O = a 1,2-diacyl-sn-glycerol + phosphate. Its activity is regulated as follows. Phenylglyoxal and propranolol inhibit activity in dose-dependent manners with IC(50) values of 1.3 mM and 0.2 mM, respectively. Sertraline inhibits activity in a dose-dependent manner with an IC(50) value of 85 uM; the inhibitory effects of sertraline and propranolol are additive. Functionally, mg(2+)-dependent phosphatidate (PA) phosphatase which catalyzes the dephosphorylation of PA to yield diacylglycerol. Required for de novo lipid synthesis and formation of lipid droplets. Controls transcription of phospholipid biosynthetic genes and nuclear structure by regulating the amount of membrane present at the nuclear envelope. Involved in plasmid maintenance, in respiration and in cell proliferation. The sequence is that of Phosphatidic acid phosphohydrolase 1 (PAH1) from Saccharomyces cerevisiae (strain ATCC 204508 / S288c) (Baker's yeast).